We begin with the raw amino-acid sequence, 707 residues long: Polyribonucleotide nucleotidyltransferase (707 aa).

Residues Asp-484 and Asp-490 each coordinate Mg(2+). In terms of domain architecture, KH spans 551–610; the sequence is PRVVRMVVNPEKIRDIIGPAGKTITKIISETGVKIDIEEDGRLYITAPNLEAGERAKQMI. Positions 620 to 688 constitute an S1 motif domain; sequence GGIYLGKVLR…KLGRIVLSRK (69 aa). Residues 688-707 form a disordered region; it reads KDAMPDEEESDNRKSDNRKK. A compositionally biased stretch (basic and acidic residues) spans 698-707; it reads DNRKSDNRKK.

The protein belongs to the polyribonucleotide nucleotidyltransferase family. The cofactor is Mg(2+).

It localises to the cytoplasm. It carries out the reaction RNA(n+1) + phosphate = RNA(n) + a ribonucleoside 5'-diphosphate. Its function is as follows. Involved in mRNA degradation. Catalyzes the phosphorolysis of single-stranded polyribonucleotides processively in the 3'- to 5'-direction. This is Polyribonucleotide nucleotidyltransferase from Caldanaerobacter subterraneus subsp. tengcongensis (strain DSM 15242 / JCM 11007 / NBRC 100824 / MB4) (Thermoanaerobacter tengcongensis).